A 24-amino-acid polypeptide reads, in one-letter code: ADNKNPLEECFRETNYEEFLEIAR.

It belongs to the flavin monoamine oxidase family. FIG1 subfamily. As to quaternary structure, homodimer; non-covalently linked. Requires FAD as cofactor. Post-translationally, N-glycosylated. As to expression, expressed by the venom gland.

It localises to the secreted. The catalysed reaction is an L-alpha-amino acid + O2 + H2O = a 2-oxocarboxylate + H2O2 + NH4(+). Catalyzes an oxidative deamination of predominantly hydrophobic and aromatic L-amino acids, thus producing hydrogen peroxide that may contribute to the diverse toxic effects of this enzyme. Exhibits diverse biological activities, such as hemorrhage, hemolysis, edema, apoptosis, and antiparasitic activities. This protein has antibacterial activity (against E.coli, S.aureus, and B.dysenteriae), cytotoxic activity, as well as an ability to induce platelet aggregation. Effects of snake L-amino oxidases on platelets are controversial, since they either induce aggregation or inhibit agonist-induced aggregation. These different effects are probably due to different experimental conditions. The protein is L-amino-acid oxidase of Protobothrops mucrosquamatus (Taiwan habu).